The following is a 445-amino-acid chain: UNC93-like protein MFSD11 (445 aa).

Residues 8–28 form a helical membrane-spanning segment; that stretch reads LLNIVILGVGFMFMFTAFQTS. Residue Asn-40 is glycosylated (N-linked (GlcNAc...) asparagine). Transmembrane regions (helical) follow at residues 52–72, 74–94, 98–118, and 138–158; these read LAII…VIAV, GCQM…AMFI, TWSF…LWTA, and IFWA…YLAW. N-linked (GlcNAc...) asparagine glycosylation occurs at Asn-163. The next 7 membrane-spanning stretches (helical) occupy residues 170–190, 239–259, 277–297, 309–329, 343–363, 385–405, and 415–435; these read RTVF…FFLI, MLLL…YSGV, LIGL…GLFG, PVVI…YLYM, LSAF…LLGL, APAF…AFFY, and LLIL…VEWG.

The protein belongs to the unc-93 family.

The protein resides in the membrane. The protein is UNC93-like protein MFSD11 (mfsd11) of Xenopus laevis (African clawed frog).